A 185-amino-acid polypeptide reads, in one-letter code: Transcription antitermination protein NusB (185 aa).

Belongs to the NusB family.

Involved in transcription antitermination. Required for transcription of ribosomal RNA (rRNA) genes. Binds specifically to the boxA antiterminator sequence of the ribosomal RNA (rrn) operons. The chain is Transcription antitermination protein NusB from Rhodospirillum rubrum (strain ATCC 11170 / ATH 1.1.1 / DSM 467 / LMG 4362 / NCIMB 8255 / S1).